Here is a 224-residue protein sequence, read N- to C-terminus: Synaptogyrin-2 (224 aa).

Met1 is subject to N-acetylmethionine. Ser3 bears the Phosphoserine mark. In terms of domain architecture, MARVEL spans 20-171 (YVSQPQVVTR…LASLAYQRYK (152 aa)). Helical transmembrane passes span 30-50 (LVSM…GYIN), 73-93 (AIGV…AFFS), 105-125 (VIGD…GFCF), and 147-167 (AAIT…SLAY).

Belongs to the synaptogyrin family. Post-translationally, may be tyrosine phosphorylated by Src. In terms of tissue distribution, ubiquitously expressed with lower expression in brain (at protein level).

The protein resides in the cytoplasmic vesicle membrane. It is found in the cytoplasmic vesicle. Its subcellular location is the secretory vesicle. It localises to the synaptic vesicle membrane. In terms of biological role, may play a role in regulated exocytosis. In neuronal cells, modulates the localization of synaptophysin/SYP into synaptic-like microvesicles and may therefore play a role in the formation and/or the maturation of this vesicles. May also play a role in GLUT4 storage and transport to the plasma membrane. The sequence is that of Synaptogyrin-2 from Rattus norvegicus (Rat).